We begin with the raw amino-acid sequence, 666 residues long: Neopullulanase 1 (666 aa).

A signal peptide spans 1–29 (MIKLLKPMSLSILLVFILSFSFPFPTAKA). Residues Ala-31, Asp-33, Asn-35, Asp-71, Asp-125, Asn-174, Asp-176, Asn-179, Asp-180, Gly-216, and Asp-218 each contribute to the Ca(2+) site. His-296 provides a ligand contact to substrate. Asp-305, Asn-309, Phe-310, Ser-312, and Glu-317 together coordinate Ca(2+). Position 383 (Arg-383) interacts with substrate. The active-site Nucleophile is the Asp-385. Glu-425 acts as the Proton donor in catalysis. Residues 500 to 501 (HD), Asp-545, and Arg-549 each bind substrate.

It belongs to the glycosyl hydrolase 13 family. It depends on Ca(2+) as a cofactor.

The protein resides in the secreted. It carries out the reaction Hydrolysis of pullulan to panose (6-alpha-D-glucosylmaltose).. Its function is as follows. Endohydrolysis of 1,4-alpha-glucosidic linkages in pullulan to form panose. Also hydrolyzes cyclodextrins. The chain is Neopullulanase 1 (tvaI) from Thermoactinomyces vulgaris.